We begin with the raw amino-acid sequence, 116 residues long: Iron-sulfur cluster insertion protein ErpA (116 aa).

The iron-sulfur cluster site is built by C44, C108, and C110.

This sequence belongs to the HesB/IscA family. Homodimer. Requires iron-sulfur cluster as cofactor.

Functionally, required for insertion of 4Fe-4S clusters for at least IspG. The protein is Iron-sulfur cluster insertion protein ErpA of Shewanella amazonensis (strain ATCC BAA-1098 / SB2B).